A 382-amino-acid polypeptide reads, in one-letter code: Galactokinase (382 aa).

34-37 (EHTD) contacts substrate. Residue 124 to 130 (GAGLSSS) participates in ATP binding. Mg(2+) contacts are provided by Ser130 and Glu162. Residue Asp174 is the Proton acceptor of the active site. Tyr223 provides a ligand contact to substrate.

Belongs to the GHMP kinase family. GalK subfamily.

The protein resides in the cytoplasm. It catalyses the reaction alpha-D-galactose + ATP = alpha-D-galactose 1-phosphate + ADP + H(+). It functions in the pathway carbohydrate metabolism; galactose metabolism. Its function is as follows. Catalyzes the transfer of the gamma-phosphate of ATP to D-galactose to form alpha-D-galactose-1-phosphate (Gal-1-P). This chain is Galactokinase, found in Shigella flexneri.